A 1175-amino-acid polypeptide reads, in one-letter code: DNA-directed RNA polymerase subunit beta (1175 aa).

Residues 12–33 (QSKTDRPQSSSNGSSSLNGSVP) form a disordered region. Low complexity predominate over residues 20–31 (SSSNGSSSLNGS).

The protein belongs to the RNA polymerase beta chain family. The RNAP catalytic core consists of 2 alpha, 1 beta, 1 beta' and 1 omega subunit. When a sigma factor is associated with the core the holoenzyme is formed, which can initiate transcription.

The enzyme catalyses RNA(n) + a ribonucleoside 5'-triphosphate = RNA(n+1) + diphosphate. In terms of biological role, DNA-dependent RNA polymerase catalyzes the transcription of DNA into RNA using the four ribonucleoside triphosphates as substrates. This Mycobacterium avium (strain 104) protein is DNA-directed RNA polymerase subunit beta.